Reading from the N-terminus, the 468-residue chain is UDP-N-acetylmuramate--L-alanine ligase (468 aa).

Residue 107–113 (GTHGKTT) coordinates ATP.

This sequence belongs to the MurCDEF family.

The protein resides in the cytoplasm. The enzyme catalyses UDP-N-acetyl-alpha-D-muramate + L-alanine + ATP = UDP-N-acetyl-alpha-D-muramoyl-L-alanine + ADP + phosphate + H(+). Its pathway is cell wall biogenesis; peptidoglycan biosynthesis. Its function is as follows. Cell wall formation. This chain is UDP-N-acetylmuramate--L-alanine ligase, found in Roseiflexus sp. (strain RS-1).